Reading from the N-terminus, the 118-residue chain is MTSYTFSRELRLLTPAQFKSVFSNPIKASSAEITLLAIPNTEQHPRMGLTVAKRFVKRANQRNRIKRVIRDSFRLNQHDIPHLDIVVLVRNGVMEMENAEINKLIEKLWRKLSRRYNG.

The protein belongs to the RnpA family. In terms of assembly, consists of a catalytic RNA component (M1 or rnpB) and a protein subunit.

It catalyses the reaction Endonucleolytic cleavage of RNA, removing 5'-extranucleotides from tRNA precursor.. In terms of biological role, RNaseP catalyzes the removal of the 5'-leader sequence from pre-tRNA to produce the mature 5'-terminus. It can also cleave other RNA substrates such as 4.5S RNA. The protein component plays an auxiliary but essential role in vivo by binding to the 5'-leader sequence and broadening the substrate specificity of the ribozyme. The protein is Ribonuclease P protein component of Shewanella baltica (strain OS155 / ATCC BAA-1091).